Reading from the N-terminus, the 208-residue chain is Meiotically up-regulated gene 9 protein (208 aa).

Residues 77 to 114 are disordered; sequence VPASNEKAARVSNLKTVPSLKRENKEVNANSKPPVKQQ.

Its function is as follows. Has a role in meiosis. The sequence is that of Meiotically up-regulated gene 9 protein (mug9) from Schizosaccharomyces pombe (strain 972 / ATCC 24843) (Fission yeast).